The sequence spans 258 residues: Deoxyribose-phosphate aldolase 2 (258 aa).

Residue Asp-102 is the Proton donor/acceptor of the active site. Lys-165 serves as the catalytic Schiff-base intermediate with acetaldehyde. Residue Lys-199 is the Proton donor/acceptor of the active site.

This sequence belongs to the DeoC/FbaB aldolase family. DeoC type 2 subfamily.

Its subcellular location is the cytoplasm. The enzyme catalyses 2-deoxy-D-ribose 5-phosphate = D-glyceraldehyde 3-phosphate + acetaldehyde. The protein operates within carbohydrate degradation; 2-deoxy-D-ribose 1-phosphate degradation; D-glyceraldehyde 3-phosphate and acetaldehyde from 2-deoxy-alpha-D-ribose 1-phosphate: step 2/2. In terms of biological role, catalyzes a reversible aldol reaction between acetaldehyde and D-glyceraldehyde 3-phosphate to generate 2-deoxy-D-ribose 5-phosphate. The sequence is that of Deoxyribose-phosphate aldolase 2 (deoC2) from Vibrio vulnificus (strain YJ016).